A 62-amino-acid chain; its full sequence is U10-buthitoxin-Hj1a (62 aa).

The N-terminal stretch at Met1–Gly22 is a signal peptide. Disulfide bonds link Cys28–Cys46, Cys33–Cys59, and Cys37–Cys61.

Belongs to the short scorpion toxin superfamily. Potassium channel inhibitor family. Alpha-KTx 23 subfamily. As to expression, expressed by the venom gland.

It is found in the secreted. May block potassium channels. The protein is U10-buthitoxin-Hj1a of Hottentotta judaicus (Black scorpion).